The following is a 701-amino-acid chain: Elongation factor G (701 aa).

Residues 11-287 form the tr-type G domain; sequence TKVRNIGIMA…AVIDYLPSPL (277 aa). GTP contacts are provided by residues 20–27, 84–88, and 138–141; these read AHIDAGKT, DTPGH, and NKMD.

This sequence belongs to the TRAFAC class translation factor GTPase superfamily. Classic translation factor GTPase family. EF-G/EF-2 subfamily.

The protein resides in the cytoplasm. Its function is as follows. Catalyzes the GTP-dependent ribosomal translocation step during translation elongation. During this step, the ribosome changes from the pre-translocational (PRE) to the post-translocational (POST) state as the newly formed A-site-bound peptidyl-tRNA and P-site-bound deacylated tRNA move to the P and E sites, respectively. Catalyzes the coordinated movement of the two tRNA molecules, the mRNA and conformational changes in the ribosome. The sequence is that of Elongation factor G from Mycobacterium marinum (strain ATCC BAA-535 / M).